Reading from the N-terminus, the 216-residue chain is Large ribosomal subunit protein uL3 (216 aa).

The interval 137 to 157 (GASHGAHKNHRKPGSIGGAST) is disordered.

It belongs to the universal ribosomal protein uL3 family. In terms of assembly, part of the 50S ribosomal subunit. Forms a cluster with proteins L14 and L19.

Functionally, one of the primary rRNA binding proteins, it binds directly near the 3'-end of the 23S rRNA, where it nucleates assembly of the 50S subunit. The chain is Large ribosomal subunit protein uL3 from Paenarthrobacter aurescens (strain TC1).